We begin with the raw amino-acid sequence, 373 residues long: Cobalt-precorrin-5B C(1)-methyltransferase (373 aa).

The protein belongs to the CbiD family.

The enzyme catalyses Co-precorrin-5B + S-adenosyl-L-methionine = Co-precorrin-6A + S-adenosyl-L-homocysteine. The protein operates within cofactor biosynthesis; adenosylcobalamin biosynthesis; cob(II)yrinate a,c-diamide from sirohydrochlorin (anaerobic route): step 6/10. Its function is as follows. Catalyzes the methylation of C-1 in cobalt-precorrin-5B to form cobalt-precorrin-6A. This Listeria welshimeri serovar 6b (strain ATCC 35897 / DSM 20650 / CCUG 15529 / CIP 8149 / NCTC 11857 / SLCC 5334 / V8) protein is Cobalt-precorrin-5B C(1)-methyltransferase.